Consider the following 287-residue polypeptide: Large ribosomal subunit protein uL2 (287 aa).

The segment at 214-287 (LGRRPEVRGS…SKRGRGGRDA (74 aa)) is disordered. The segment covering 271–287 (QRRRRKSSKRGRGGRDA) has biased composition (basic residues).

Belongs to the universal ribosomal protein uL2 family. Part of the 50S ribosomal subunit. Forms a bridge to the 30S subunit in the 70S ribosome.

Functionally, one of the primary rRNA binding proteins. Required for association of the 30S and 50S subunits to form the 70S ribosome, for tRNA binding and peptide bond formation. It has been suggested to have peptidyltransferase activity; this is somewhat controversial. Makes several contacts with the 16S rRNA in the 70S ribosome. The protein is Large ribosomal subunit protein uL2 of Synechococcus elongatus (strain ATCC 33912 / PCC 7942 / FACHB-805) (Anacystis nidulans R2).